Reading from the N-terminus, the 261-residue chain is 4-hydroxy-tetrahydrodipicolinate reductase (261 aa).

NAD(+) contacts are provided by residues 11–16, 96–98, and 122–125; these read GFMGAM, GTT, and APNF. Catalysis depends on histidine 152, which acts as the Proton donor/acceptor. Histidine 153 is a (S)-2,3,4,5-tetrahydrodipicolinate binding site. Lysine 156 functions as the Proton donor in the catalytic mechanism. 162–163 is a binding site for (S)-2,3,4,5-tetrahydrodipicolinate; sequence GT.

The protein belongs to the DapB family.

It localises to the cytoplasm. It catalyses the reaction (S)-2,3,4,5-tetrahydrodipicolinate + NAD(+) + H2O = (2S,4S)-4-hydroxy-2,3,4,5-tetrahydrodipicolinate + NADH + H(+). It carries out the reaction (S)-2,3,4,5-tetrahydrodipicolinate + NADP(+) + H2O = (2S,4S)-4-hydroxy-2,3,4,5-tetrahydrodipicolinate + NADPH + H(+). Its pathway is amino-acid biosynthesis; L-lysine biosynthesis via DAP pathway; (S)-tetrahydrodipicolinate from L-aspartate: step 4/4. Functionally, catalyzes the conversion of 4-hydroxy-tetrahydrodipicolinate (HTPA) to tetrahydrodipicolinate. The protein is 4-hydroxy-tetrahydrodipicolinate reductase of Lactobacillus helveticus (strain DPC 4571).